We begin with the raw amino-acid sequence, 525 residues long: G-protein regulator 1 (525 aa).

The region spanning 424-445 (PVDMMDLIFSMSSRMDDQRTEL) is the GoLoco domain. The interval 488–525 (HTMNRILKRSKKSKSSLDSTNSMQGDDTRSDDVTMTSK) is disordered.

In terms of assembly, interacts with gpr-1, lin-5 and GDP-bound goa-1.

It localises to the cytoplasm. The protein localises to the cell cortex. The protein resides in the cytoskeleton. Its subcellular location is the spindle. Functionally, in the 1-cell embryo, probably together with gpr-2, controls nuclear rotation and spindle elongation during mitosis. Complex of gpr-1 and gpr-2, in association with lin-5, activates G-protein signaling to affect mitotic spindle force. Polarity determinants (par genes) may regulate lin-5/gpr-1/gpr-2/goa-1 locally to create the asymmetric forces that drive spindle movement. This Caenorhabditis elegans protein is G-protein regulator 1 (gpr-1).